Consider the following 237-residue polypeptide: MVSAVLLIQKATPETITQFHDQLSNELPTLRGKWNFNFKIFRNNPYSIPQELAETATVAPESKWLYTLSPSYLSDSSISLINGKSVGVFTNLIKEEAGEHGHSVELSIPNSHLHKGATTDLNDPFDFFVAQKLQSLWTQRQLIRGDGGRIYELENGNLTIRTSNVFLHGNFRGLLVQIEINQNLCNVDDVSSFASTFETIRNKYGIPAGDLSCEVLDPKRLDTYADLIYQYSKILNF.

Belongs to the Mediator complex subunit 20 family. Component of the Mediator complex.

It is found in the nucleus. In terms of biological role, component of the Mediator complex, a coactivator involved in the regulated transcription of nearly all RNA polymerase II-dependent genes. Mediator functions as a bridge to convey information from gene-specific regulatory proteins to the basal RNA polymerase II transcription machinery. Mediator is recruited to promoters by direct interactions with regulatory proteins and serves as a scaffold for the assembly of a functional preinitiation complex with RNA polymerase II and the general transcription factors. The protein is Mediator of RNA polymerase II transcription subunit 20 (SRB2) of Scheffersomyces stipitis (strain ATCC 58785 / CBS 6054 / NBRC 10063 / NRRL Y-11545) (Yeast).